The primary structure comprises 576 residues: 60 kDa heat shock protein homolog 2, mitochondrial (576 aa).

The N-terminal 61 residues, 1-61 (MMRMFRYTNT…AVTMGPKGRN (61 aa)), are a transit peptide targeting the mitochondrion.

The protein belongs to the chaperonin (HSP60) family. First detectable expression is seen in the posterior part of the dorsal tracheal trunk at stage 14-15, which marks the beginning of terminal tracheation. In the larval gut, expression in proventriculus is stronger than in midgut and hindgut. Malpighian tubules shows low expression and late third instar larval imaginal disks and brain showed moderate expression. In larval ovary and testis, expression is strong in the posterior region.

It localises to the mitochondrion matrix. Its function is as follows. Prevents misfolding and promotes the refolding and proper assembly of unfolded polypeptides generated under stress conditions. Essential for proper development of trachea, spermatogonia and spermatocytes. The polypeptide is 60 kDa heat shock protein homolog 2, mitochondrial (Hsp60C) (Drosophila melanogaster (Fruit fly)).